The following is a 549-amino-acid chain: DDB1- and CUL4-associated factor 11 (549 aa).

Residues 1-24 are compositionally biased toward low complexity; that stretch reads MGSRNSSSAGSGSLEPSEGLSRRG. A disordered region spans residues 1-40; it reads MGSRNSSSAGSGSLEPSEGLSRRGTGLRRSEEEEEEDEDV. Phosphoserine occurs at positions 73 and 75. 7 WD repeats span residues 170 to 210, 216 to 258, 263 to 302, 305 to 345, 353 to 392, 435 to 480, and 481 to 520; these read TYSQ…HKFK, DVGW…TALD, ERRF…RTLQ, SHED…EDDP, GHQD…SREG, GVLH…KKLT, and NHKA…YFQD.

Interacts with DDB1 and CUL4A.

The protein operates within protein modification; protein ubiquitination. In terms of biological role, may function as a substrate receptor for CUL4-DDB1 E3 ubiquitin-protein ligase complex. This Mus musculus (Mouse) protein is DDB1- and CUL4-associated factor 11 (Dcaf11).